The primary structure comprises 294 residues: Ribosomal protein L11 methyltransferase (294 aa).

Residues threonine 144, glycine 165, aspartate 187, and asparagine 229 each coordinate S-adenosyl-L-methionine.

The protein belongs to the methyltransferase superfamily. PrmA family.

The protein resides in the cytoplasm. The catalysed reaction is L-lysyl-[protein] + 3 S-adenosyl-L-methionine = N(6),N(6),N(6)-trimethyl-L-lysyl-[protein] + 3 S-adenosyl-L-homocysteine + 3 H(+). In terms of biological role, methylates ribosomal protein L11. This chain is Ribosomal protein L11 methyltransferase, found in Cellvibrio japonicus (strain Ueda107) (Pseudomonas fluorescens subsp. cellulosa).